A 425-amino-acid polypeptide reads, in one-letter code: Paired box pox-neuro protein (425 aa).

The paired DNA-binding region spans 5 to 132 (GQAGVNQLGG…SSINRILRNS (128 aa)). The tract at residues 8-64 (GVNQLGGVFVNGRPLPDCVRRRIVDLALCGVRPCDISRQLLVSHGCVSKILTRFYET) is PAI subdomain. Residues 84-132 (TVVKKIIRLKEENSGMFAWEIREQLQQQRVCDPSSVPSISSINRILRNS) form an RED subdomain region. 3 disordered regions span residues 159 to 188 (QAGS…AATP), 297 to 358 (TKSE…RKRN), and 383 to 425 (LESS…EVVN). Over residues 172 to 185 (APPPPVTVAPPTPA) the composition is skewed to pro residues. 2 stretches are compositionally biased toward low complexity: residues 323-332 (SSPAALSLTA) and 340-349 (GSAPEASPGS). Over residues 402–425 (TPEDEDPAEAEEEQEEEDSVEVVN) the composition is skewed to acidic residues.

Central and peripheral nervous systems.

It localises to the nucleus. In terms of biological role, transcriptional regulator that specifies poly-innervated organs (chemosensory bristle). Also controls the number of neurons. In Drosophila melanogaster (Fruit fly), this protein is Paired box pox-neuro protein (Poxn).